We begin with the raw amino-acid sequence, 428 residues long: Adenylosuccinate synthetase (428 aa).

GTP-binding positions include 12-18 and 40-42; these read GDEGKGK and GHT. Residue Asp-13 is the Proton acceptor of the active site. Positions 13 and 40 each coordinate Mg(2+). IMP is bound by residues 13–16, 38–41, Thr-130, Arg-144, Gln-225, Thr-240, and Arg-304; these read DEGK and NAGH. His-41 (proton donor) is an active-site residue. 300 to 306 provides a ligand contact to substrate; the sequence is VTTGRSR. Residues Arg-306, 332–334, and 414–416 contribute to the GTP site; these read KID and GVG.

The protein belongs to the adenylosuccinate synthetase family. As to quaternary structure, homodimer. The cofactor is Mg(2+).

It is found in the cytoplasm. It catalyses the reaction IMP + L-aspartate + GTP = N(6)-(1,2-dicarboxyethyl)-AMP + GDP + phosphate + 2 H(+). It functions in the pathway purine metabolism; AMP biosynthesis via de novo pathway; AMP from IMP: step 1/2. Its function is as follows. Plays an important role in the de novo pathway of purine nucleotide biosynthesis. Catalyzes the first committed step in the biosynthesis of AMP from IMP. The protein is Adenylosuccinate synthetase of Clostridium botulinum (strain Alaska E43 / Type E3).